The following is a 374-amino-acid chain: Protein FAM199X (374 aa).

A disordered region spans residues 238–343 (YIREHSPRQR…QLKEQRQARK (106 aa)). Low complexity predominate over residues 261-295 (SNGSTSGVSAHSSSNASMVSSTSSSTASTGSNSST). Residues 315–334 (DSKKRSKQRKMQQKALRKRQ) show a composition bias toward basic residues. Residues 317–346 (KKRSKQRKMQQKALRKRQLKEQRQARKERL) adopt a coiled-coil conformation.

It belongs to the FAM199 family.

The chain is Protein FAM199X (fam199x) from Danio rerio (Zebrafish).